The sequence spans 223 residues: Ribonuclease S-2 (223 aa).

Residues 1–22 (MAKSQLVSALFVFFFSLSPIYG) form the signal peptide. An intrachain disulfide couples Cys38 to Cys44. The N-linked (GlcNAc...) asparagine glycan is linked to Asn51. Catalysis depends on His55, which acts as the Proton donor. Residues His55 and 94-95 (QL) each bind RNA. 3 disulfide bridges follow: Cys71–Cys119, Cys178–Cys211, and Cys194–Cys205. Gln112 is a catalytic residue. Residue 115–116 (KH) participates in RNA binding. His116 functions as the Proton acceptor in the catalytic mechanism.

Belongs to the RNase T2 family. In terms of tissue distribution, pistil.

Its subcellular location is the secreted. The protein resides in the extracellular space. It carries out the reaction a ribonucleotidyl-ribonucleotide-RNA + H2O = a 3'-end 3'-phospho-ribonucleotide-RNA + a 5'-end dephospho-ribonucleoside-RNA + H(+). Functionally, self-incompatibility (SI) is the inherited ability of a flowering plant to prevent self-fertilization by discriminating between self and non-self pollen during pollination. In many species of the Solanaceae, self-incompatibility is controlled by the single, multiallelic locus S. This stylar glycoprotein is associated with expression of self-incompatibility in potato. The protein is Ribonuclease S-2 of Solanum tuberosum (Potato).